The primary structure comprises 308 residues: Snake venom metalloprotease inhibitor 02D01 (308 aa).

Residues 1 to 23 form the signal peptide; sequence MFVSRLAASGLLLLSLLALSLDG. The propeptide occupies 24–38; the sequence is KPLPQRQPHHIQPME. A Pyrrolidone carboxylic acid modification is found at Gln-39. A propeptide spanning residues 42–50 is cleaved from the precursor; it reads LAPDAPPLE. Gln-51 carries the pyrrolidone carboxylic acid modification. Residues 54–62 constitute a propeptide that is removed on maturation; the sequence is LAPDAPPLE. Position 63 is a pyrrolidone carboxylic acid (Gln-63). Positions 66-74 are excised as a propeptide; it reads LAPAAPPLE. The residue at position 75 (Gln-75) is a Pyrrolidone carboxylic acid. A propeptide spanning residues 78–86 is cleaved from the precursor; the sequence is LAPDAPPME. A Pyrrolidone carboxylic acid modification is found at Gln-87. A propeptide spanning residues 90–98 is cleaved from the precursor; the sequence is LAPDAPPME. The residue at position 99 (Gln-99) is a Pyrrolidone carboxylic acid. Positions 102 to 110 are excised as a propeptide; the sequence is LAPDAPPME. The residue at position 111 (Gln-111) is a Pyrrolidone carboxylic acid. Residues 114–122 constitute a propeptide that is removed on maturation; the sequence is LAPDAPPME. Gln-123 is modified (pyrrolidone carboxylic acid). Positions 126 to 134 are excised as a propeptide; sequence LAPDAAPLE. Gln-135 is modified (pyrrolidone carboxylic acid). A propeptide spanning residues 138-146 is cleaved from the precursor; that stretch reads LAPDAPPME. Gln-147 carries the pyrrolidone carboxylic acid modification. Positions 150 to 158 are excised as a propeptide; that stretch reads LAPDAPPME. Gln-159 is modified (pyrrolidone carboxylic acid). A propeptide spanning residues 162–249 is cleaved from the precursor; it reads QPQIPSLMEQ…KQASQKWGRL (88 aa). Residues 172 to 182 are compositionally biased toward polar residues; sequence RQLSSGGTTAL. 2 disordered regions span residues 172 to 228 and 252 to 279; these read RQLS…AAAT and HDHDHHHHHHPGSSVGGGGGGGGGGARR. Over residues 198–209 the composition is skewed to gly residues; sequence VVGGGGGGGGGS. Low complexity predominate over residues 210 to 227; it reads KAALALPKPPKAKGAAAA. The segment covering 265 to 277 has biased composition (gly residues); sequence SVGGGGGGGGGGA. Residues 278 to 286 constitute a propeptide that is removed on maturation; the sequence is RRLKGLAKK. Cys-292 and Cys-308 are disulfide-bonded.

This sequence in the C-terminal section; belongs to the natriuretic peptide family. The protein in the central section; belongs to the pHpG family. Expressed by the venom gland.

It localises to the secreted. Functionally, pEKW and poly-His-poly-Gly peptides may serve as metalloproteinase inhibitors during glandular storage. Their inhibition may be instantly disengaged, by dilution or physiochemical change, when venom is injected into tissue of the prey. Its function is as follows. has a vasorelaxant activity in rat aortic strips and a diuretic potency in anesthetized rats. May act by activating natriuretic receptors (NPR1 and/or NPR2). The chain is Snake venom metalloprotease inhibitor 02D01 from Echis ocellatus (Ocellated saw-scaled viper).